Consider the following 741-residue polypeptide: MSLSCGDLANHNDRVVSLLNVCRKAPSFARTKALHALSITLCSVLLQPVYVCNNIISLYEKLGEVSLAGKVFDQMPERNKVSFNTIIKGYSKYGDVDKAWGVFSEMRYFGYLPNQSTVSGLLSCASLDVRAGTQLHGLSLKYGLFMADAFVGTCLLCLYGRLDLLEMAEQVFEDMPFKSLETWNHMMSLLGHRGFLKECMFFFRELVRMGASLTESSFLGVLKGVSCVKDLDISKQLHCSATKKGLDCEISVVNSLISAYGKCGNTHMAERMFQDAGSWDIVSWNAIICATAKSENPLKALKLFVSMPEHGFSPNQGTYVSVLGVSSLVQLLSCGRQIHGMLIKNGCETGIVLGNALIDFYAKCGNLEDSRLCFDYIRDKNIVCWNALLSGYANKDGPICLSLFLQMLQMGFRPTEYTFSTALKSCCVTELQQLHSVIVRMGYEDNDYVLSSLMRSYAKNQLMNDALLLLDWASGPTSVVPLNIVAGIYSRRGQYHESVKLISTLEQPDTVSWNIAIAACSRSDYHEEVIELFKHMLQSNIRPDKYTFVSILSLCSKLCDLTLGSSIHGLITKTDFSCADTFVCNVLIDMYGKCGSIRSVMKVFEETREKNLITWTALISCLGIHGYGQEALEKFKETLSLGFKPDRVSFISILTACRHGGMVKEGMGLFQKMKDYGVEPEMDHYRCAVDLLARNGYLKEAEHLIREMPFPADAPVWRTFLDGCNRFAEEQRNTLNVVSFQ.

PPR repeat units follow at residues 48–78 (PVYV…MPER), 79–113 (NKVS…GYLP), 114–146 (NQST…GLFM), 148–178 (DAFV…MPFK), 179–213 (SLET…GASL), 214–248 (TESS…GLDC), 249–279 (EISV…AGSW), 280–314 (DIVS…GFSP), 315–349 (NQGT…GCET), 350–380 (GIVL…IRDK), 381–414 (NIVC…GFRP), 415–445 (TEYT…GYED), 446–481 (NDYV…SVVP), 483–508 (NIVA…LEQP), 509–543 (DTVS…NIRP), 544–578 (DKYT…DFSC), 580–610 (DTFV…TREK), 611–645 (NLIT…GFKP), 646–680 (DRVS…GVEP), and 681–715 (EMDH…ADAP).

It belongs to the PPR family. P subfamily.

The protein is Pentatricopeptide repeat-containing protein At3g58590 of Arabidopsis thaliana (Mouse-ear cress).